We begin with the raw amino-acid sequence, 179 residues long: Large ribosomal subunit protein uL5 (179 aa).

The protein belongs to the universal ribosomal protein uL5 family. In terms of assembly, part of the 50S ribosomal subunit; part of the 5S rRNA/L5/L18/L25 subcomplex. Contacts the 5S rRNA and the P site tRNA. Forms a bridge to the 30S subunit in the 70S ribosome.

Functionally, this is one of the proteins that bind and probably mediate the attachment of the 5S RNA into the large ribosomal subunit, where it forms part of the central protuberance. In the 70S ribosome it contacts protein S13 of the 30S subunit (bridge B1b), connecting the 2 subunits; this bridge is implicated in subunit movement. Contacts the P site tRNA; the 5S rRNA and some of its associated proteins might help stabilize positioning of ribosome-bound tRNAs. This is Large ribosomal subunit protein uL5 from Vibrio atlanticus (strain LGP32) (Vibrio splendidus (strain Mel32)).